The chain runs to 418 residues: Pigment epithelium-derived factor (418 aa).

The first 19 residues, M1 to C19, serve as a signal peptide directing secretion. Residue Q20 is modified to Pyrrolidone carboxylic acid. Residues Q20–L39 are disordered. S24 and S114 each carry phosphoserine; by CK2. Position 227 is a phosphoserine; by PKA (S227). An N-linked (GlcNAc...) (complex) asparagine glycan is attached at N285. The segment at T371–T383 is O-glycosylated at one site.

It belongs to the serpin family. In terms of assembly, interacts with PNPLA2; this interaction stimulates the phospholipase A2 activity of PNPLA2. Post-translationally, the N-terminus is blocked. Extracellular phosphorylation enhances antiangiogenic activity. In terms of processing, N- and O-glycosylated. O-glycosylated with a core 1 or possibly core 8 glycan. As to expression, retinal pigment epithelial cells and blood plasma.

It is found in the secreted. The protein resides in the melanosome. Functionally, neurotrophic protein; induces extensive neuronal differentiation in retinoblastoma cells. Potent inhibitor of angiogenesis. As it does not undergo the S (stressed) to R (relaxed) conformational transition characteristic of active serpins, it exhibits no serine protease inhibitory activity. This is Pigment epithelium-derived factor (SERPINF1) from Homo sapiens (Human).